We begin with the raw amino-acid sequence, 264 residues long: Myozenin-2 (264 aa).

An Omega-N-methylarginine modification is found at R53. Positions 98–134 (ESGSQQAPFTPPNTPDPRSPPNPENIAPGYSGPLKEI) are disordered. Residue S101 is modified to Phosphoserine. Residues 106–120 (FTPPNTPDPRSPPNP) are compositionally biased toward pro residues. Residues T107 and T111 each carry the phosphothreonine modification. Phosphoserine is present on S116.

Belongs to the myozenin family. As to quaternary structure, interacts via its C-terminus with spectrin repeats 3 and 4 of ACTN2. Interacts with ACTN1, LDB3, MYOT and PPP3CA.

The protein localises to the cytoplasm. It localises to the myofibril. The protein resides in the sarcomere. It is found in the z line. Functionally, myozenins may serve as intracellular binding proteins involved in linking Z line proteins such as alpha-actinin, gamma-filamin, TCAP/telethonin, LDB3/ZASP and localizing calcineurin signaling to the sarcomere. Plays an important role in the modulation of calcineurin signaling. May play a role in myofibrillogenesis. This chain is Myozenin-2 (MYOZ2), found in Bos taurus (Bovine).